The chain runs to 204 residues: Putative AgrB-like protein (204 aa).

5 helical membrane passes run 51-73 (VYGIALVTGLLLQTVTVHLSYLW), 87-107 (LNCTLISLTMFVLAPFIFQNI), 111-131 (NWIVLGTFAFILLNMFLFAPA), 151-168 (AMIGTLILTGIALLIPFA), and 173-190 (LIMVGSLFQVISINPLTY).

It belongs to the AgrB family.

The protein resides in the cell membrane. In terms of biological role, may be involved in the proteolytic processing of a quorum sensing system signal molecule precursor. This is Putative AgrB-like protein from Listeria innocua serovar 6a (strain ATCC BAA-680 / CLIP 11262).